The chain runs to 130 residues: Small ribosomal subunit protein uS8 (130 aa).

The protein belongs to the universal ribosomal protein uS8 family. As to quaternary structure, part of the 30S ribosomal subunit.

One of the primary rRNA binding proteins, it binds directly to 16S rRNA central domain where it helps coordinate assembly of the platform of the 30S subunit. The chain is Small ribosomal subunit protein uS8 from Methanopyrus kandleri (strain AV19 / DSM 6324 / JCM 9639 / NBRC 100938).